The sequence spans 296 residues: Gamma-D-glutamyl-L-lysine dipeptidyl-peptidase (296 aa).

Substrate-binding positions include Tyr90, 199–201, and 218–219; these read DCS and DA. Positions 170 to 295 constitute a NlpC/P60 domain; the sequence is KGTAEDIIQT…ELCAVRRCFS (126 aa). The active-site Nucleophile is Cys200. His253 acts as the Proton acceptor in catalysis. His265 is an active-site residue.

The protein belongs to the peptidase C40 family.

It carries out the reaction The enzyme releases L-Ala-gamma-D-Glu dipeptides from cell wall peptides via cleavage of an L-Ala-gamma-D-Glu-|-L-Lys bond.. It participates in cell wall degradation; peptidoglycan degradation. Its function is as follows. Specifically hydrolyzes gamma-D-glutamyl-L-lysine bonds in murein peptides, releasing L-Ala-D-Glu. The chain is Gamma-D-glutamyl-L-lysine dipeptidyl-peptidase (ykfC) from Bacillus subtilis (strain 168).